Reading from the N-terminus, the 67-residue chain is Large ribosomal subunit protein bL35 (67 aa).

This sequence belongs to the bacterial ribosomal protein bL35 family.

This chain is Large ribosomal subunit protein bL35, found in Leptospira interrogans serogroup Icterohaemorrhagiae serovar Lai (strain 56601).